The primary structure comprises 484 residues: tRNA-2-methylthio-N(6)-dimethylallyladenosine synthase (484 aa).

An MTTase N-terminal domain is found at 36–153 (GKLYIKTHGC…LPELIRARRE (118 aa)). The [4Fe-4S] cluster site is built by cysteine 45, cysteine 82, cysteine 116, cysteine 190, cysteine 194, and cysteine 197. In terms of domain architecture, Radical SAM core spans 176–415 (RAEGPSAFVS…HISAHAASIS (240 aa)). A TRAM domain is found at 416–479 (QSMVGSVQRV…SNSLRGRIQL (64 aa)). The disordered stretch occupies residues 428–450 (EGPSRRDPNELTGKSENMRPVNF).

This sequence belongs to the methylthiotransferase family. MiaB subfamily. Monomer. [4Fe-4S] cluster serves as cofactor.

The protein resides in the cytoplasm. It carries out the reaction N(6)-dimethylallyladenosine(37) in tRNA + (sulfur carrier)-SH + AH2 + 2 S-adenosyl-L-methionine = 2-methylsulfanyl-N(6)-dimethylallyladenosine(37) in tRNA + (sulfur carrier)-H + 5'-deoxyadenosine + L-methionine + A + S-adenosyl-L-homocysteine + 2 H(+). Catalyzes the methylthiolation of N6-(dimethylallyl)adenosine (i(6)A), leading to the formation of 2-methylthio-N6-(dimethylallyl)adenosine (ms(2)i(6)A) at position 37 in tRNAs that read codons beginning with uridine. This chain is tRNA-2-methylthio-N(6)-dimethylallyladenosine synthase, found in Xanthomonas oryzae pv. oryzae (strain PXO99A).